Here is a 418-residue protein sequence, read N- to C-terminus: UDP-N-acetylglucosamine 1-carboxyvinyltransferase (418 aa).

Phosphoenolpyruvate is bound at residue 23-24; it reads KN. A UDP-N-acetyl-alpha-D-glucosamine-binding site is contributed by Arg93. The active-site Proton donor is the Asp117. Residues Asp305 and Ile327 each coordinate UDP-N-acetyl-alpha-D-glucosamine.

Belongs to the EPSP synthase family. MurA subfamily.

The protein resides in the cytoplasm. The enzyme catalyses phosphoenolpyruvate + UDP-N-acetyl-alpha-D-glucosamine = UDP-N-acetyl-3-O-(1-carboxyvinyl)-alpha-D-glucosamine + phosphate. It functions in the pathway cell wall biogenesis; peptidoglycan biosynthesis. Cell wall formation. Adds enolpyruvyl to UDP-N-acetylglucosamine. The chain is UDP-N-acetylglucosamine 1-carboxyvinyltransferase from Corynebacterium jeikeium (strain K411).